Here is a 308-residue protein sequence, read N- to C-terminus: Cell division protein FtsQ (308 aa).

The Cytoplasmic segment spans residues 1 to 53; the sequence is MDSGGRIVYALNVEKTGFLRILSVTVLQRLYRRVFWFLFKCVAGIDVPRHAGS. Residues 54–74 form a helical membrane-spanning segment; sequence LAVFSFFFLSILYSISSGGYM. The Periplasmic portion of the chain corresponds to 75–308; sequence NHFMKVAISN…LLKMLKAGSV (234 aa). The 69-residue stretch at 87-155 folds into the POTRA domain; sequence FLVTHVDMSG…DRLRISLVER (69 aa).

Belongs to the FtsQ/DivIB family. FtsQ subfamily.

The protein resides in the cell inner membrane. Essential cell division protein. This Bartonella bacilliformis protein is Cell division protein FtsQ.